The primary structure comprises 61 residues: Large ribosomal subunit protein uL30 (61 aa).

The protein belongs to the universal ribosomal protein uL30 family. In terms of assembly, part of the 50S ribosomal subunit.

The polypeptide is Large ribosomal subunit protein uL30 (Fervidobacterium nodosum (strain ATCC 35602 / DSM 5306 / Rt17-B1)).